The chain runs to 323 residues: Global nitrogen regulator NrpRI (323 aa).

A winged helix-turn-helix region spans residues 11–76; sequence IEIMRVIHES…TLTDLGENEM (66 aa). Positions 86-323 are NRD; the sequence is GFVISRIEEM…MLDYQTMKEI (238 aa).

It belongs to the NrpR family. As to quaternary structure, forms a complex with NrpRII and the general archaeal transcription factors TBP and TFB. Interacts directly with NrpRII.

Its activity is regulated as follows. Under nitrogen limitation, binding of 2-oxoglutarate to the NrpRI/NrpRII complex decreases the binding affinity of NrpRI to DNA as well as the binding affinity of NrpRII to TBP and TFB, which leads to removal of the complex from the operator, RNA polymerase recruitment and initiation of transcription. In terms of biological role, plays a major role in nitrogen regulation. Under nitrogen sufficiency, binds to the nifH and the glnk1 promoters, leading to repression of the transcription of the genes. The protein is Global nitrogen regulator NrpRI of Methanosarcina mazei (strain ATCC BAA-159 / DSM 3647 / Goe1 / Go1 / JCM 11833 / OCM 88) (Methanosarcina frisia).